Reading from the N-terminus, the 509-residue chain is Cytochrome P450 monooxygenase fumoA (509 aa).

The chain crosses the membrane as a helical span at residues 5 to 27; the sequence is LANLNFPYLILSACLSAILLSRF. Residues Asn317, Asn369, and Asn378 are each glycosylated (N-linked (GlcNAc...) asparagine). Cys456 serves as a coordination point for heme. Asn464 carries an N-linked (GlcNAc...) asparagine glycan.

The protein belongs to the cytochrome P450 family. Heme is required as a cofactor.

It is found in the membrane. It participates in secondary metabolite biosynthesis. Cytochrome P450 monooxygenase; part of the gene cluster that mediates the biosynthesis of fumosorinone, a 2-pyridone alkaloid that acts as an inhibitor of protein tyrosine phosphatase 1B which is implicated asa negative regulator of insulin receptor signaling and a potential drug target for the treatment of type II diabetes and other associated metabolic syndromes. The polyketide-amino acid backbone of fumosorinone is first assembled by the PKS-NRPS hybrid fumoS. The PKS modules condense one acetyl-CoA starter unit with 7 malonyl-CoA units, programmed C-methylations occurring after the first 3 and the sixth extensions, and cycles of full reduction occurring after the first 2 extensions. Because fumoS lacks a designated enoyl reductase (ER) domain, the required activity is provided the enoyl reductase fumoC. Upon formation of the polyketide backbone on the thiotemplate, the polyketide is transferred to the NRPS module and linked to tyrosine to produce the acyltetramic acid intermediate called prefumosorinone A. The cytochrome P450 monooxygenase fumoA then probably catalyzes an unprecedented oxidative ring expansion of prefumosorinone A to form prefumosorinone B which contains the 2-pyridone core of fumosorinone. The cytochrome P450 monooxygenase fumoB might hydroxylate the nitrogen of prefumosorinone B, but not the acyltetramic acid prefumosorinone A, to form fumosorinone. This chain is Cytochrome P450 monooxygenase fumoA, found in Cordyceps fumosorosea (strain ARSEF 2679) (Isaria fumosorosea).